We begin with the raw amino-acid sequence, 340 residues long: Glutaminyl-peptide cyclotransferase (340 aa).

The signal sequence occupies residues 1–23; that stretch reads MAIGSVVFAAAGLLLLLLPPSHQ. Asparagine 42 carries N-linked (GlcNAc...) asparagine glycosylation. Positions 85 and 91 each coordinate alpha-D-mannopyranose. Cysteine 113 and cysteine 136 are joined by a disulfide. Aspartate 131 lines the Zn(2+) pocket. Residues glutamine 151 and arginine 155 each coordinate alpha-D-mannopyranose. An N-linked (GlcNAc...) asparagine glycan is attached at asparagine 156. Glutamate 170 acts as the Proton acceptor in catalysis. Zn(2+) is bound at residue glutamate 171. The active-site Proton acceptor is aspartate 218. Residue histidine 297 coordinates Zn(2+). Leucine 306 is a binding site for alpha-D-mannopyranose.

The protein belongs to the glutaminyl-peptide cyclotransferase family.

It is found in the secreted. It catalyses the reaction N-terminal L-glutaminyl-[peptide] = N-terminal 5-oxo-L-prolyl-[peptide] + NH4(+). Its activity is regulated as follows. Inhibited by imidazoles (imidazole, benzimidazole, 1-benzylimidazole, 1-methylimidazole, P150/03, N-omega-acetylhistamine and 4-methylimidazole) and cysteamines (cysteamine, N-dimethylcysteamine and N-diethylcysteamine). Partially inhibited by PDB50 1(3,4-dimethoxyphenyl)-3-(3-imidazol-1-ylpropyl)thiourea. Acts as a glutaminyl-peptide cyclotransferase. Responsible for the biosynthesis of pyroglutamyl peptides. Might be more efficient in the conversion of tri and tetrapeptides in vitro. Might have a relative preference for substrates containing hydrophobic amino acids in vitro. This Drosophila melanogaster (Fruit fly) protein is Glutaminyl-peptide cyclotransferase.